The chain runs to 81 residues: Sulfur carrier protein TusA (81 aa).

Residue Cys19 is the Cysteine persulfide intermediate of the active site.

Belongs to the sulfur carrier protein TusA family. In terms of assembly, interacts with IscS.

The protein localises to the cytoplasm. It participates in tRNA modification. Functionally, sulfur carrier protein involved in sulfur trafficking in the cell. Part of a sulfur-relay system required for 2-thiolation during synthesis of 2-thiouridine of the modified wobble base 5-methylaminomethyl-2-thiouridine (mnm(5)s(2)U) in tRNA. Interacts with IscS and stimulates its cysteine desulfurase activity. Accepts an activated sulfur from IscS, which is then transferred to TusD, and thus determines the direction of sulfur flow from IscS to 2-thiouridine formation. Also appears to be involved in sulfur transfer for the biosynthesis of molybdopterin. This chain is Sulfur carrier protein TusA, found in Erwinia tasmaniensis (strain DSM 17950 / CFBP 7177 / CIP 109463 / NCPPB 4357 / Et1/99).